Reading from the N-terminus, the 448-residue chain is Tubulin beta chain (448 aa).

The GTP site is built by Gln11, Glu69, Ser138, Gly142, Thr143, Gly144, Asn204, and Asn226. Glu69 contributes to the Mg(2+) binding site. A disordered region spans residues 426-448 (QDAGIDEEEEEYEEEAPVDEPLE). A compositionally biased stretch (acidic residues) spans 429–448 (GIDEEEEEYEEEAPVDEPLE).

Belongs to the tubulin family. Dimer of alpha and beta chains. A typical microtubule is a hollow water-filled tube with an outer diameter of 25 nm and an inner diameter of 15 nM. Alpha-beta heterodimers associate head-to-tail to form protofilaments running lengthwise along the microtubule wall with the beta-tubulin subunit facing the microtubule plus end conferring a structural polarity. Microtubules usually have 13 protofilaments but different protofilament numbers can be found in some organisms and specialized cells. Requires Mg(2+) as cofactor.

Its subcellular location is the cytoplasm. The protein localises to the cytoskeleton. In terms of biological role, tubulin is the major constituent of microtubules, a cylinder consisting of laterally associated linear protofilaments composed of alpha- and beta-tubulin heterodimers. Microtubules grow by the addition of GTP-tubulin dimers to the microtubule end, where a stabilizing cap forms. Below the cap, tubulin dimers are in GDP-bound state, owing to GTPase activity of alpha-tubulin. The protein is Tubulin beta chain (TUB2) of Epichloe coenophiala (Tall fescue endophyte fungus).